The chain runs to 487 residues: GPI mannosyltransferase 1 (487 aa).

The next 3 helical transmembrane spans lie at 26 to 46 (PLPL…YGLW), 87 to 107 (ILAW…GPWA), and 121 to 141 (VLFA…LVMG). The interval 147–175 (SAAKGKEKDTEKTKEGGKKGPSVTASTGM) is disordered. The span at 150–164 (KGKEKDTEKTKEGGK) shows a compositional bias: basic and acidic residues. The next 7 membrane-spanning stretches (helical) occupy residues 205–225 (LLGV…ITLA), 227–247 (LLLG…PAIV), 289–309 (LLLA…MYRL), 359–379 (IESL…PLTL), 393–413 (FAFV…YLVL), 429–449 (MGLV…QQAY), and 462–482 (GLWM…GVIV).

It belongs to the PIGM family.

Its subcellular location is the endoplasmic reticulum membrane. It functions in the pathway glycolipid biosynthesis; glycosylphosphatidylinositol-anchor biosynthesis. Mannosyltransferase involved in glycosylphosphatidylinositol-anchor biosynthesis. Transfers the first alpha-1,4-mannose to GlcN-acyl-PI during GPI precursor assembly. Required for cell wall integrity. This Neurospora crassa (strain ATCC 24698 / 74-OR23-1A / CBS 708.71 / DSM 1257 / FGSC 987) protein is GPI mannosyltransferase 1 (gim-1).